Reading from the N-terminus, the 121-residue chain is Met-lysine-1a (121 aa).

Residues 1-22 (MKSFVFALALIVAFACISESKS) form the signal peptide. Positions 23 to 69 (DHTGYEEEENLEDSELTDLVTAALLEELAEASEMDDLSYTEEAGGER) are excised as a propeptide. M120 is subject to Methionine amide.

Expressed by the venom gland.

Its subcellular location is the secreted. Functionally, shows no antimicrobial activity against Gram-positive bacterium B.subtilis B-501 or Gram-negative bacterium E.coli DH5-alpha at concentrations up to 20 ug/ml. Shows no toxicity towards insect (S.carnaria) larvae. The chain is Met-lysine-1a from Lachesana tarabaevi (Spider).